The following is a 253-amino-acid chain: Nurim homolog (253 aa).

At 1–2 the chain is on the nuclear side; that stretch reads MT. A helical transmembrane segment spans residues 3-30; the sequence is SIAKSIVLLASLATFAYSLYVVGSLMMF. Over 31-56 the chain is Perinuclear space; that stretch reads LSTPRSISKAHTWIFNLLDNKSRLQT. A helical transmembrane segment spans residues 57 to 78; that stretch reads AYGPVVFDTLYLIGFIFQHSFL. Topologically, residues 79 to 96 are nuclear; it reads KSAVVKKLLAKLGLSGAE. The helical transmembrane segment at 97–113 threads the bilayer; that stretch reads RTIYSLTSSLCLHYLIV. The Perinuclear space portion of the chain corresponds to 114–132; it reads NWLPAQSIVLWQIDVEQSA. A helical transmembrane segment spans residues 133 to 161; sequence PLWWTFVITHGICWVVIFGGSLVMDLPEL. Residues 162-188 are Nuclear-facing; it reads LGVKQAYYDLKAYGPPISYKSGELRNL. A helical membrane pass occupies residues 189–207; the sequence is YAHVRHPSFVGLSVILFAT. At 208-213 the chain is on the perinuclear space side; that stretch reads NVMSVD. The chain crosses the membrane as a helical span at residues 214-231; the sequence is RLVMALLLTTYMYLAWST. Over 232–253 the chain is Nuclear; the sequence is DQKDVAYQKIQLQRKKLELKAK.

This sequence belongs to the nurim family.

The protein localises to the nucleus inner membrane. The protein is Nurim homolog (nrm) of Drosophila melanogaster (Fruit fly).